Here is a 545-residue protein sequence, read N- to C-terminus: Indole-3-pyruvate decarboxylase (545 aa).

Thiamine diphosphate is bound at residue Glu48. The interval 382-460 (DCLFTAMDMI…VILFNNASWE (79 aa)) is thiamine pyrophosphate binding. Mg(2+) contacts are provided by Asp429 and Asn456.

It belongs to the TPP enzyme family. It depends on a metal cation as a cofactor. The cofactor is thiamine diphosphate.

The catalysed reaction is indole-3-pyruvate + H(+) = indole-3-acetaldehyde + CO2. It functions in the pathway plant hormone metabolism; auxin biosynthesis. The protein is Indole-3-pyruvate decarboxylase (ipdC) of Azospirillum brasilense.